A 246-amino-acid polypeptide reads, in one-letter code: MEVSHVTLAPNKDSRAAVLTIGKFDGVHIGHQTILNTALSIKKENEILTAISFSPHPLWALKQIEIYREMLTPRMEKERWLAYYGVNHLIETEFTSRYAETTPEEFVTDHLTNLNLSHIVVGSEFNFGKGRDSDVDLLRDLCKPYDIGVTSVPVIETNQTKISSTNIRAFIRRGHFQEAEELLGHPWYITGIVENGEMTGLDDYVLPATGTYQTDSGIVNVTNNRTIEVGLSDGLQQLHMKNELSE.

It belongs to the RibF family.

The catalysed reaction is FMN + ATP + H(+) = FAD + diphosphate. Its pathway is cofactor biosynthesis; FAD biosynthesis; FAD from FMN: step 1/1. In terms of biological role, catalyzes the adenylation of flavin mononucleotide (FMN) to form flavin adenine dinucleotide (FAD) coenzyme. Can also catalyze, with lower efficiency, the adenylation of the toxic riboflavin analogs 8-demethyl-8-aminoriboflavin mononucleotide (AFMN) and roseoflavin mononucleotide (RoFMN) to 8-demethyl-8-aminoriboflavin adenine dinucleotide (AFAD) and roseoflavin adenine dinucleotide (RoFAD), respectively. The protein is FAD synthetase of Listeria monocytogenes serovar 1/2a (strain ATCC BAA-679 / EGD-e).